Consider the following 556-residue polypeptide: Formate--tetrahydrofolate ligase (556 aa).

65–72 (TPAGEGKS) is an ATP binding site.

The protein belongs to the formate--tetrahydrofolate ligase family.

It catalyses the reaction (6S)-5,6,7,8-tetrahydrofolate + formate + ATP = (6R)-10-formyltetrahydrofolate + ADP + phosphate. It participates in one-carbon metabolism; tetrahydrofolate interconversion. The polypeptide is Formate--tetrahydrofolate ligase (Streptococcus thermophilus (strain ATCC BAA-250 / LMG 18311)).